The primary structure comprises 188 residues: Inosine triphosphate pyrophosphatase (188 aa).

12–17 (TGNKNK) is an ITP binding site. Residue E40 participates in Mg(2+) binding. ITP-binding positions include K52, 68–69 (DT), K85, 144–147 (FGWD), K165, and 170–171 (HR).

This sequence belongs to the HAM1 NTPase family. As to quaternary structure, homodimer. It depends on Mg(2+) as a cofactor. The cofactor is Mn(2+).

It localises to the cytoplasm. The protein localises to the nucleus. The catalysed reaction is ITP + H2O = IMP + diphosphate + H(+). It catalyses the reaction dITP + H2O = dIMP + diphosphate + H(+). The enzyme catalyses XTP + H2O = XMP + diphosphate + H(+). In terms of biological role, pyrophosphatase that hydrolyzes non-canonical purine nucleotides such as inosine triphosphate (ITP), deoxyinosine triphosphate (dITP) or xanthosine 5'-triphosphate (XTP) to their respective monophosphate derivatives. The enzyme does not distinguish between the deoxy- and ribose forms. Probably excludes non-canonical purines from RNA and DNA precursor pools, thus preventing their incorporation into RNA and DNA and avoiding chromosomal lesions. In Phaeosphaeria nodorum (strain SN15 / ATCC MYA-4574 / FGSC 10173) (Glume blotch fungus), this protein is Inosine triphosphate pyrophosphatase.